Consider the following 123-residue polypeptide: Cliotide T12 (123 aa).

Positions 1-28 (MASLRIAPLALFFFLAASVMFTVEKTEA) are cleaved as a signal peptide. Residues 29–58 (GIPCGESCVFIPCITGAIGCSCKSKVCYRD) constitute a cross-link (cyclopeptide (Gly-Asp)). Intrachain disulfides connect C32–C48, C36–C50, and C41–C55. A propeptide spans 59-123 (HVIAAEAKTM…KDHLKMSVPN (65 aa)) (removed in mature form).

In terms of processing, contains 3 disulfide bonds. This is a cyclic peptide.

Probably participates in a plant defense mechanism. This chain is Cliotide T12, found in Clitoria ternatea (Butterfly pea).